Here is a 218-residue protein sequence, read N- to C-terminus: Pyridoxine/pyridoxamine 5'-phosphate oxidase (218 aa).

Substrate-binding positions include 14 to 17 (RREY) and Lys-72. Residues 67–72 (RIVLLK), 82–83 (YT), Arg-88, Lys-89, and Gln-111 contribute to the FMN site. Substrate contacts are provided by Tyr-129, Arg-133, and Ser-137. Residues 146-147 (QS) and Trp-191 each bind FMN. 197–199 (RLH) serves as a coordination point for substrate. Arg-201 is a binding site for FMN.

Belongs to the pyridoxamine 5'-phosphate oxidase family. As to quaternary structure, homodimer. Requires FMN as cofactor.

It catalyses the reaction pyridoxamine 5'-phosphate + O2 + H2O = pyridoxal 5'-phosphate + H2O2 + NH4(+). The enzyme catalyses pyridoxine 5'-phosphate + O2 = pyridoxal 5'-phosphate + H2O2. The protein operates within cofactor metabolism; pyridoxal 5'-phosphate salvage; pyridoxal 5'-phosphate from pyridoxamine 5'-phosphate: step 1/1. It functions in the pathway cofactor metabolism; pyridoxal 5'-phosphate salvage; pyridoxal 5'-phosphate from pyridoxine 5'-phosphate: step 1/1. Catalyzes the oxidation of either pyridoxine 5'-phosphate (PNP) or pyridoxamine 5'-phosphate (PMP) into pyridoxal 5'-phosphate (PLP). In Escherichia coli O7:K1 (strain IAI39 / ExPEC), this protein is Pyridoxine/pyridoxamine 5'-phosphate oxidase.